Reading from the N-terminus, the 523-residue chain is Glutamate--cysteine ligase (523 aa).

Belongs to the glutamate--cysteine ligase type 1 family. Type 1 subfamily.

The enzyme catalyses L-cysteine + L-glutamate + ATP = gamma-L-glutamyl-L-cysteine + ADP + phosphate + H(+). It functions in the pathway sulfur metabolism; glutathione biosynthesis; glutathione from L-cysteine and L-glutamate: step 1/2. The protein is Glutamate--cysteine ligase of Baumannia cicadellinicola subsp. Homalodisca coagulata.